Here is a 455-residue protein sequence, read N- to C-terminus: Glutamyl-tRNA reductase (455 aa).

Residues 49–52 (TCNR), serine 109, 114–116 (ETQ), and glutamine 120 each bind substrate. Cysteine 50 serves as the catalytic Nucleophile. An NADP(+)-binding site is contributed by 189–194 (GAGKMG).

This sequence belongs to the glutamyl-tRNA reductase family. As to quaternary structure, homodimer.

The enzyme catalyses (S)-4-amino-5-oxopentanoate + tRNA(Glu) + NADP(+) = L-glutamyl-tRNA(Glu) + NADPH + H(+). The protein operates within porphyrin-containing compound metabolism; protoporphyrin-IX biosynthesis; 5-aminolevulinate from L-glutamyl-tRNA(Glu): step 1/2. Functionally, catalyzes the NADPH-dependent reduction of glutamyl-tRNA(Glu) to glutamate 1-semialdehyde (GSA). In Bacillus subtilis (strain 168), this protein is Glutamyl-tRNA reductase.